Here is a 401-residue protein sequence, read N- to C-terminus: Forkhead box protein H1 (401 aa).

The segment at 32–57 is disordered; sequence MGPRDNSQLRPPEAESLSKTPKRRKK. A DNA-binding region (fork-head) is located at residues 64 to 163; it reads KPPYTYLAMI…QNTALCRRWQ (100 aa). The disordered stretch occupies residues 179–251; it reads VLHGQPYQPP…PSSSSETPLW (73 aa). Residues 185-195 are compositionally biased toward pro residues; it reads YQPPSPPPPPR. Residues 221 to 230 show a composition bias toward polar residues; that stretch reads GQSTAAQAGT. The SMAD-interaction domain (SID) stretch occupies residues 307–390; the sequence is LWGQLPTSYL…VSHPRDLAAP (84 aa). The Fast/FoxH1 motif 1 (FM1) motif lies at 311-315; sequence LPTSY. Residues 321-327 carry the Fast/FoxH1 motif 2 (FM2) motif; that stretch reads PNVVMPL. An SMAD interaction motif (SIM) motif is present at residues 363–384; it reads LDSLFQGVPPNKSIYDVWVSHP.

Interacts with the MH2 domains of SMAD2 and SMAD3.

The protein resides in the nucleus. Transcriptional activator. Recognizes and binds to the DNA sequence 5'-TGT[GT][GT]ATT-3'. Required for induction of the goosecoid (GSC) promoter by TGF-beta or activin signaling. Forms a transcriptionally active complex containing FOXH1/SMAD2/SMAD4 on a site on the GSC promoter called TARE (TGF-beta/activin response element). The chain is Forkhead box protein H1 (Foxh1) from Mus musculus (Mouse).